The sequence spans 252 residues: Segregation and condensation protein A (252 aa).

The tract at residues 117 to 136 (EREEERQNAFTKPPSDLSEF) is disordered.

It belongs to the ScpA family. In terms of assembly, component of a cohesin-like complex composed of ScpA, ScpB and the Smc homodimer, in which ScpA and ScpB bind to the head domain of Smc. The presence of the three proteins is required for the association of the complex with DNA.

It is found in the cytoplasm. In terms of biological role, participates in chromosomal partition during cell division. May act via the formation of a condensin-like complex containing Smc and ScpB that pull DNA away from mid-cell into both cell halves. The sequence is that of Segregation and condensation protein A from Bacillus pumilus (strain SAFR-032).